A 166-amino-acid polypeptide reads, in one-letter code: Small ribosomal subunit protein uS5 (166 aa).

One can recognise an S5 DRBM domain in the interval 11–74 (LEDRVVSINR…EDAKKNLINV (64 aa)).

The protein belongs to the universal ribosomal protein uS5 family. In terms of assembly, part of the 30S ribosomal subunit. Contacts proteins S4 and S8.

Functionally, with S4 and S12 plays an important role in translational accuracy. Its function is as follows. Located at the back of the 30S subunit body where it stabilizes the conformation of the head with respect to the body. This chain is Small ribosomal subunit protein uS5, found in Latilactobacillus sakei subsp. sakei (strain 23K) (Lactobacillus sakei subsp. sakei).